A 369-amino-acid polypeptide reads, in one-letter code: Tetraacyldisaccharide 4'-kinase (369 aa).

Residue 68 to 75 coordinates ATP; sequence VVGGTGKT.

This sequence belongs to the LpxK family.

It catalyses the reaction a lipid A disaccharide + ATP = a lipid IVA + ADP + H(+). It functions in the pathway glycolipid biosynthesis; lipid IV(A) biosynthesis; lipid IV(A) from (3R)-3-hydroxytetradecanoyl-[acyl-carrier-protein] and UDP-N-acetyl-alpha-D-glucosamine: step 6/6. Functionally, transfers the gamma-phosphate of ATP to the 4'-position of a tetraacyldisaccharide 1-phosphate intermediate (termed DS-1-P) to form tetraacyldisaccharide 1,4'-bis-phosphate (lipid IVA). The protein is Tetraacyldisaccharide 4'-kinase of Chlamydia muridarum (strain MoPn / Nigg).